A 125-amino-acid polypeptide reads, in one-letter code: uncharacterized protein (125 aa).

Residues 1–21 (MIRNIIITISAILLLTSKGFA) form the signal peptide. The stretch at 54–102 (KPEIREEIQKYRVEIVNINKKKRELYDKLSKEAQNFLAKEQEYKQRLSS) forms a coiled coil. A disordered region spans residues 96-125 (YKQRLSSSSMATEDSKDNNTAKDNKDADKK). Residues 108–125 (EDSKDNNTAKDNKDADKK) show a composition bias toward basic and acidic residues.

This is an uncharacterized protein from Rickettsia bellii (strain RML369-C).